Reading from the N-terminus, the 248-residue chain is Ubiquinone/menaquinone biosynthesis C-methyltransferase UbiE (248 aa).

2 residues coordinate S-adenosyl-L-methionine: S68 and D92.

Belongs to the class I-like SAM-binding methyltransferase superfamily. MenG/UbiE family.

The catalysed reaction is a 2-demethylmenaquinol + S-adenosyl-L-methionine = a menaquinol + S-adenosyl-L-homocysteine + H(+). It carries out the reaction a 2-methoxy-6-(all-trans-polyprenyl)benzene-1,4-diol + S-adenosyl-L-methionine = a 5-methoxy-2-methyl-3-(all-trans-polyprenyl)benzene-1,4-diol + S-adenosyl-L-homocysteine + H(+). It participates in quinol/quinone metabolism; menaquinone biosynthesis; menaquinol from 1,4-dihydroxy-2-naphthoate: step 2/2. The protein operates within cofactor biosynthesis; ubiquinone biosynthesis. Functionally, methyltransferase required for the conversion of demethylmenaquinol (DMKH2) to menaquinol (MKH2) and the conversion of 2-polyprenyl-6-methoxy-1,4-benzoquinol (DDMQH2) to 2-polyprenyl-3-methyl-6-methoxy-1,4-benzoquinol (DMQH2). This Rickettsia conorii (strain ATCC VR-613 / Malish 7) protein is Ubiquinone/menaquinone biosynthesis C-methyltransferase UbiE.